Reading from the N-terminus, the 263-residue chain is Acyl-[acyl-carrier-protein]--UDP-N-acetylglucosamine O-acyltransferase (263 aa).

The protein belongs to the transferase hexapeptide repeat family. LpxA subfamily. In terms of assembly, homotrimer.

It is found in the cytoplasm. It carries out the reaction a (3R)-hydroxyacyl-[ACP] + UDP-N-acetyl-alpha-D-glucosamine = a UDP-3-O-[(3R)-3-hydroxyacyl]-N-acetyl-alpha-D-glucosamine + holo-[ACP]. It functions in the pathway glycolipid biosynthesis; lipid IV(A) biosynthesis; lipid IV(A) from (3R)-3-hydroxytetradecanoyl-[acyl-carrier-protein] and UDP-N-acetyl-alpha-D-glucosamine: step 1/6. Involved in the biosynthesis of lipid A, a phosphorylated glycolipid that anchors the lipopolysaccharide to the outer membrane of the cell. The polypeptide is Acyl-[acyl-carrier-protein]--UDP-N-acetylglucosamine O-acyltransferase (Tolumonas auensis (strain DSM 9187 / NBRC 110442 / TA 4)).